We begin with the raw amino-acid sequence, 206 residues long: Orotate phosphoribosyltransferase (206 aa).

Residues Arg-97, Lys-98, Lys-101, and 125 to 133 each bind 5-phospho-alpha-D-ribose 1-diphosphate; that span reads NDVIASGRS. Arg-157 contributes to the orotate binding site.

This sequence belongs to the purine/pyrimidine phosphoribosyltransferase family. PyrE subfamily. Homodimer. Requires Mg(2+) as cofactor.

The enzyme catalyses orotidine 5'-phosphate + diphosphate = orotate + 5-phospho-alpha-D-ribose 1-diphosphate. It functions in the pathway pyrimidine metabolism; UMP biosynthesis via de novo pathway; UMP from orotate: step 1/2. Functionally, catalyzes the transfer of a ribosyl phosphate group from 5-phosphoribose 1-diphosphate to orotate, leading to the formation of orotidine monophosphate (OMP). In Chlamydia caviae (strain ATCC VR-813 / DSM 19441 / 03DC25 / GPIC) (Chlamydophila caviae), this protein is Orotate phosphoribosyltransferase.